We begin with the raw amino-acid sequence, 150 residues long: Large ribosomal subunit protein bL9 (150 aa).

Belongs to the bacterial ribosomal protein bL9 family.

Binds to the 23S rRNA. This is Large ribosomal subunit protein bL9 from Streptococcus gordonii (strain Challis / ATCC 35105 / BCRC 15272 / CH1 / DL1 / V288).